Reading from the N-terminus, the 430-residue chain is MSLTLEFLLLLIVLILSHHAHSGSIVKFLPGFEGPLPFELETGYIGIGEEEEVQLFYYFIKSEKNPEEDPLLLWLSGGPGCSSLTGLLFENGPVALKFEVYNGSVPSLVSTTYSWTKMANIIFLDQPVGSGFSYSRTPLVDKISDTGEVKRIYEFLQKWLSKHQQFFSNPFYVGGDSYSGMIVPPLVQEIGKGNYQINLQGYILGNPITDTESEQNYQIPYAHGMALISDELYKSMERICKGNYVKVDSLNTKCYKLIKDYQKCIHKLNKYHILLPDCDITSPDCFLYRYTLITFWANNKSVREALQVNKGSIGKWVQCNYKNISYNYDIKSSVAYHMKNSIDGYRSLIYNGDHDMMVPFLATQAWIRSLNYSITDDWKPWMINDQIAGYTRSYSNKMTFATIKGSGHTAEYKPKETSIMFKRWISAQPL.

An N-terminal signal peptide occupies residues 1 to 22 (MSLTLEFLLLLIVLILSHHAHS). 3 cysteine pairs are disulfide-bonded: cysteine 81–cysteine 319, cysteine 240–cysteine 254, and cysteine 278–cysteine 285. A glycan (N-linked (GlcNAc...) asparagine) is linked at asparagine 102. Serine 177 is an active-site residue. 2 N-linked (GlcNAc...) asparagine glycosylation sites follow: asparagine 299 and asparagine 323. Aspartate 355 is a catalytic residue. N-linked (GlcNAc...) asparagine glycosylation is present at asparagine 371. The active site involves histidine 408.

This sequence belongs to the peptidase S10 family. As to expression, expression not detected.

It is found in the secreted. The enzyme catalyses 2 1-O-(trans-sinapoyl)-beta-D-glucose = 1,2-di-O-sinapoyl beta-D-glucose + D-glucose. Catalyzes the formation of 1,2-bis-O-sinapoyl beta-D-glucoside. In Arabidopsis thaliana (Mouse-ear cress), this protein is Serine carboxypeptidase-like 13 (SCPL13).